A 349-amino-acid chain; its full sequence is Small ribosomal subunit protein eS6 (349 aa).

The segment at 224-349 (RRRSRLSSMR…AKKEKKQKKK (126 aa)) is disordered. Composition is skewed to basic and acidic residues over residues 231–251 (SMRDSRSSIGEERDKEKEKAA) and 260–334 (KKEA…EAAK).

Belongs to the eukaryotic ribosomal protein eS6 family. Component of the small ribosomal subunit. Part of the small subunit (SSU) processome, composed of more than 70 proteins and the RNA chaperone small nucleolar RNA (snoRNA) U3. Post-translationally, ribosomal protein S6 is the major substrate of protein kinases in eukaryote ribosomes.

The protein resides in the cytoplasm. It is found in the nucleus. Its subcellular location is the nucleolus. Functionally, component of the 40S small ribosomal subunit. Plays an important role in controlling cell growth and proliferation through the selective translation of particular classes of mRNA. Part of the small subunit (SSU) processome, first precursor of the small eukaryotic ribosomal subunit. During the assembly of the SSU processome in the nucleolus, many ribosome biogenesis factors, an RNA chaperone and ribosomal proteins associate with the nascent pre-rRNA and work in concert to generate RNA folding, modifications, rearrangements and cleavage as well as targeted degradation of pre-ribosomal RNA by the RNA exosome. In Aedes albopictus (Asian tiger mosquito), this protein is Small ribosomal subunit protein eS6 (RpS6).